Consider the following 123-residue polypeptide: Maintenance of telomere capping protein 3, mitochondrial (123 aa).

The N-terminal 37 residues, 1 to 37, are a transit peptide targeting the mitochondrion; sequence MMGRNGIRLALKRSFSTYQPPVVEITNITKLWPTLRP.

The protein resides in the mitochondrion. Functionally, may be involved in telomere capping. This is Maintenance of telomere capping protein 3, mitochondrial (MTC3) from Saccharomyces cerevisiae (strain ATCC 204508 / S288c) (Baker's yeast).